The chain runs to 181 residues: Large ribosomal subunit protein uL5c (181 aa).

This sequence belongs to the universal ribosomal protein uL5 family. Part of the 50S ribosomal subunit; contacts the 5S rRNA.

It is found in the plastid. It localises to the chloroplast. Functionally, binds 5S rRNA, forms part of the central protuberance of the 50S subunit. The protein is Large ribosomal subunit protein uL5c (rpl5) of Rhodomonas salina (Cryptomonas salina).